We begin with the raw amino-acid sequence, 210 residues long: Large ribosomal subunit protein uL3 (210 aa).

This sequence belongs to the universal ribosomal protein uL3 family. Part of the 50S ribosomal subunit. Forms a cluster with proteins L14 and L19.

In terms of biological role, one of the primary rRNA binding proteins, it binds directly near the 3'-end of the 23S rRNA, where it nucleates assembly of the 50S subunit. The sequence is that of Large ribosomal subunit protein uL3 from Natranaerobius thermophilus (strain ATCC BAA-1301 / DSM 18059 / JW/NM-WN-LF).